A 242-amino-acid polypeptide reads, in one-letter code: Protein fmp-52, mitochondrial (242 aa).

Residues 1 to 87 constitute a mitochondrion transit peptide; it reads MSTSTPTSTA…VISSLGTTRV (87 aa). The interval 33-58 is disordered; sequence SSQVQTISRRAPANPTNSSRLSPTVN. The segment covering 35–58 has biased composition (polar residues); it reads QVQTISRRAPANPTNSSRLSPTVN.

This sequence belongs to the FMP52 family.

Its subcellular location is the mitochondrion outer membrane. The chain is Protein fmp-52, mitochondrial (fmp-52) from Neurospora crassa (strain ATCC 24698 / 74-OR23-1A / CBS 708.71 / DSM 1257 / FGSC 987).